Here is a 438-residue protein sequence, read N- to C-terminus: Protein c-ets-1-A (438 aa).

The PNT domain occupies 49-134 (ATFSRFTKEQ…EHLEILQKDS (86 aa)). The tract at residues 128-240 (EILQKDSKQY…DNMCLGRISR (113 aa)) is activation domain; required for transcription activation. The tract at residues 301–309 (FKDYVRDRA) is helix HI-1. A helix HI-2 region spans residues 320–327 (AAALAGYT). Residues 332-412 (IQLWQFLLEL…AGKRYVYRFV (81 aa)) constitute a DNA-binding region (ETS). Residues 415–419 (LQSLL) form a helix H4 region. Residues 423–429 (PEELHAM) form a helix H5 region.

It belongs to the ETS family. As to quaternary structure, binds DNA as a homodimer; homodimerization is required for transcription activation.

Its subcellular location is the nucleus. It is found in the cytoplasm. Its activity is regulated as follows. Autoinhibited by a module composed of four alpha helices (HI-1, HI-2, H4, and H5) that flank the DNA-binding ETS domain, reducing the affinity for DNA. Transcription factor. Directly controls the expression of cytokine and chemokine genes in a wide variety of different cellular contexts. The chain is Protein c-ets-1-A (ets1-a) from Xenopus laevis (African clawed frog).